The chain runs to 353 residues: Protein-glutamate methylesterase/protein-glutamine glutaminase 3 (353 aa).

The Response regulatory domain maps to 3–120 (KVLIADDSAL…SSSSDMKKVA (118 aa)). Asp-54 carries the post-translational modification 4-aspartylphosphate. In terms of domain architecture, CheB-type methylesterase spans 158 to 353 (PRPGREVTKA…AREIIRAVNR (196 aa)). Residues Ser-173, His-200, and Asp-296 contribute to the active site.

Belongs to the CheB family. Phosphorylated by CheA. Phosphorylation of the N-terminal regulatory domain activates the methylesterase activity.

Its subcellular location is the cytoplasm. It carries out the reaction [protein]-L-glutamate 5-O-methyl ester + H2O = L-glutamyl-[protein] + methanol + H(+). The enzyme catalyses L-glutaminyl-[protein] + H2O = L-glutamyl-[protein] + NH4(+). Its function is as follows. Involved in chemotaxis. Part of a chemotaxis signal transduction system that modulates chemotaxis in response to various stimuli. Catalyzes the demethylation of specific methylglutamate residues introduced into the chemoreceptors (methyl-accepting chemotaxis proteins or MCP) by CheR. Also mediates the irreversible deamidation of specific glutamine residues to glutamic acid. This is Protein-glutamate methylesterase/protein-glutamine glutaminase 3 from Syntrophomonas wolfei subsp. wolfei (strain DSM 2245B / Goettingen).